The chain runs to 609 residues: Glutamine--fructose-6-phosphate aminotransferase [isomerizing] (609 aa).

The Nucleophile; for GATase activity role is filled by Cys2. One can recognise a Glutamine amidotransferase type-2 domain in the interval 2-217 (CGIVGAIAGR…EGDTAELRRD (216 aa)). 2 SIS domains span residues 284–425 (TADA…LQGR) and 458–599 (WAER…VDKP). Lys604 (for Fru-6P isomerization activity) is an active-site residue.

Homodimer.

The protein localises to the cytoplasm. It catalyses the reaction D-fructose 6-phosphate + L-glutamine = D-glucosamine 6-phosphate + L-glutamate. In terms of biological role, catalyzes the first step in hexosamine metabolism, converting fructose-6P into glucosamine-6P using glutamine as a nitrogen source. The protein is Glutamine--fructose-6-phosphate aminotransferase [isomerizing] of Xanthomonas campestris pv. campestris (strain ATCC 33913 / DSM 3586 / NCPPB 528 / LMG 568 / P 25).